The following is a 416-amino-acid chain: Vacuole membrane protein KMS2 (416 aa).

Position 2 is an N-acetylglycine (glycine 2). Topologically, residues 2 to 59 are cytoplasmic; it reads GYGNRASSKTPAISGLREKHQQDLEKLTLTSQPFKTLRLFVVAVFLYVRRWSSYLLAN. Residues 60–80 traverse the membrane as a helical segment; it reads VGWLILFCSIFVAFAALLVTL. At 81-100 the chain is on the lumenal side; it reads DGPHVKHVEELSEYTRFGLW. The chain crosses the membrane as a helical span at residues 101 to 123; the sequence is WIFLGVASSIGLGSGLHTFVLYL. At 124 to 249 the chain is on the cytoplasmic side; that stretch reads GPHIALFTIK…WLLSHSQYLN (126 aa). The helical transmembrane segment at 250–270 threads the bilayer; sequence FFTILILASVPNPLFDLAGIM. Residues 271 to 281 lie on the Lumenal side of the membrane; sequence CGQFEKPFWEF. Residues 282-304 form a helical membrane-spanning segment; sequence FLATLIGKAIIKTHIQTVFIICV. Residues 305-315 lie on the Cytoplasmic side of the membrane; the sequence is CNNQLLDWVEN. Residues 316–336 form a helical membrane-spanning segment; it reads ELIYILSFVPGFASALPELTA. Topologically, residues 337–364 are lumenal; it reads KLRLMKEKYLIASPPVSSDINVKKWDLS. The chain crosses the membrane as a helical span at residues 365–385; it reads FASVWNGVVWLMLLNFFGQIV. At 386–416 the chain is on the cytoplasmic side; that stretch reads TSTAQRYLKKQQEEELDALTNKSSLTSKKSK.

The protein belongs to the VMP1 family.

It localises to the endoplasmic reticulum membrane. Involved in the early secretory pathway. Required for the correct export of secretory products from the endoplasmic reticulum (ER) and involved in the maintenance of ER integrity. This is Vacuole membrane protein KMS2 from Arabidopsis thaliana (Mouse-ear cress).